The sequence spans 173 residues: Membrane-bound hydrogenase subunit beta (173 aa).

It belongs to the complex I 30 kDa subunit family. As to quaternary structure, the membrane-bound hydrogenase complex is composed of MbhK and MbhL, and may also contain MbhJ. It depends on Ni(2+) as a cofactor.

Its subcellular location is the cell membrane. It carries out the reaction H2 + 2 oxidized [2Fe-2S]-[ferredoxin] = 2 reduced [2Fe-2S]-[ferredoxin] + 2 H(+). Its activity is regulated as follows. Inhibited by 0.1 mM Cu(2+). Its function is as follows. Beta subunit of a hydrogen-evolving hydrogenase that utilizes protons both as a substrate for hydrogen production and proton translocation. Acts by coupling the redox reaction via ferredoxin and iron-sulfur (Fe-S) clusters to proton translocation across the membrane thereby conserving the redox energy in a proton gradient. This chain is Membrane-bound hydrogenase subunit beta, found in Pyrococcus furiosus (strain ATCC 43587 / DSM 3638 / JCM 8422 / Vc1).